Here is a 712-residue protein sequence, read N- to C-terminus: 1,4-alpha-glucan branching enzyme GlgB (712 aa).

Residue Asp397 is the Nucleophile of the active site. Glu450 (proton donor) is an active-site residue.

Belongs to the glycosyl hydrolase 13 family. GlgB subfamily. As to quaternary structure, monomer.

It carries out the reaction Transfers a segment of a (1-&gt;4)-alpha-D-glucan chain to a primary hydroxy group in a similar glucan chain.. It functions in the pathway glycan biosynthesis; glycogen biosynthesis. In terms of biological role, catalyzes the formation of the alpha-1,6-glucosidic linkages in glycogen by scission of a 1,4-alpha-linked oligosaccharide from growing alpha-1,4-glucan chains and the subsequent attachment of the oligosaccharide to the alpha-1,6 position. This Bradyrhizobium sp. (strain BTAi1 / ATCC BAA-1182) protein is 1,4-alpha-glucan branching enzyme GlgB.